The sequence spans 145 residues: uncharacterized protein (145 aa).

This sequence belongs to the asfivirus K145R family.

It localises to the virion. This is an uncharacterized protein from Ornithodoros (relapsing fever ticks).